A 485-amino-acid polypeptide reads, in one-letter code: N-succinylglutamate 5-semialdehyde dehydrogenase (485 aa).

220 to 225 (GSANTG) contributes to the NAD(+) binding site. Residues glutamate 243 and cysteine 278 contribute to the active site.

Belongs to the aldehyde dehydrogenase family. AstD subfamily.

It catalyses the reaction N-succinyl-L-glutamate 5-semialdehyde + NAD(+) + H2O = N-succinyl-L-glutamate + NADH + 2 H(+). It functions in the pathway amino-acid degradation; L-arginine degradation via AST pathway; L-glutamate and succinate from L-arginine: step 4/5. Its function is as follows. Catalyzes the NAD-dependent reduction of succinylglutamate semialdehyde into succinylglutamate. This is N-succinylglutamate 5-semialdehyde dehydrogenase from Vibrio campbellii (strain ATCC BAA-1116).